Here is a 90-residue protein sequence, read N- to C-terminus: Acylphosphatase (90 aa).

Residues 5-90 (CLKAWVTGRV…DPPPGTFELG (86 aa)) enclose the Acylphosphatase-like domain. Active-site residues include arginine 20 and asparagine 38.

This sequence belongs to the acylphosphatase family.

The enzyme catalyses an acyl phosphate + H2O = a carboxylate + phosphate + H(+). The polypeptide is Acylphosphatase (acyP) (Chromohalobacter salexigens (strain ATCC BAA-138 / DSM 3043 / CIP 106854 / NCIMB 13768 / 1H11)).